The sequence spans 943 residues: MTDYKATLNLPDTAFPMKAGLPQREPQTLQRWDSIGLYQKLREIGKDRPKFVLHDGPPYANGTIHIGHAVNKILKDMILRSKTLAGFDAPYVPGWDCHGLPIEHKVEVTHGKNLSADRTRELCRAYAAEQIEGQKSEFIRLGVLGDWSNPYLTMNFANEAGEIRALAEMVKGGFVFKGLKPVNWCFDCGSALAEAEVEYQDKKSSTIDVAFPIADEAKLAAAFGLPSLGKPASIVIWTTTPWTIPANQALNVHPEFEYSLVDVGDKLLVLASELVESCLARYKLEGTVVATTTGQALELINFRHPFYDRLSPIYLAEYVELSAGTGIVHCSPAYGVDDFTICKQYGLSNDDIISPVQSNGVYVESLEFFGGQFIFKANQNIIDKLVEVGSLMDTETISHSYMHCWRHKSPLIYRATAQWFVGMDKQPESGETLRKRAVKAIEDTEFVPAWGQARLHSMIANRPDWCISRQRNWGVPIPFFLHKESGDLHPRTVELMEEVALRVEKEGIEAWFKLDASELLGDEAAKYDKISDTLDVWFDSGTTHWHVLRGSHPMGHETGPRADLYLEGSDQHRGWFHSSLLTGCMLDDHAPYRELLTHGFVVDENGRKMSKSLNNVVAPQKVNDSLGADIMRLWVSATDYSGEMAVSDQILQRSADAYRRIRNTARFLLSNLSGFNPATDILPAEEMLALDRWAVDRTLLLQRELQEHYGEYRFWNVYSKIHNFCVQELGGFYLDIIKDRQYTTAADSTARRSCQTALFHISEALVRWIAPILAFTADELWQFLPGERNESVMLNTWYEGLTELPADFEMDRAYWERIMAVKTSVNKEMENLRAAKAIGGNLQAEVTLYAEDSLVADLSKLSNELRFVLITSTASVAPFVSAPADAVVTEVAGLKLKVVKSGHAKCARCWHHREDVGVNPEHPEICGRCIDNISGAGEVRHYA.

The short motif at 58–68 (PYANGTIHIGH) is the 'HIGH' region element. E567 is a binding site for L-isoleucyl-5'-AMP. Residues 608-612 (KMSKS) carry the 'KMSKS' region motif. ATP is bound at residue K611. C906, C909, C926, and C929 together coordinate Zn(2+).

The protein belongs to the class-I aminoacyl-tRNA synthetase family. IleS type 1 subfamily. As to quaternary structure, monomer. It depends on Zn(2+) as a cofactor.

It is found in the cytoplasm. It carries out the reaction tRNA(Ile) + L-isoleucine + ATP = L-isoleucyl-tRNA(Ile) + AMP + diphosphate. Its function is as follows. Catalyzes the attachment of isoleucine to tRNA(Ile). As IleRS can inadvertently accommodate and process structurally similar amino acids such as valine, to avoid such errors it has two additional distinct tRNA(Ile)-dependent editing activities. One activity is designated as 'pretransfer' editing and involves the hydrolysis of activated Val-AMP. The other activity is designated 'posttransfer' editing and involves deacylation of mischarged Val-tRNA(Ile). This is Isoleucine--tRNA ligase from Pseudomonas syringae pv. tomato (strain ATCC BAA-871 / DC3000).